The following is a 467-amino-acid chain: Syntaxin-5 (467 aa).

Disordered stretches follow at residues 1–53 and 58–77; these read MQTR…QSLV and GHEAAIHIGDNYQSGDSIST. Over 1 to 445 the chain is Cytoplasmic; it reads MQTRRRLHQT…KYFQSVSKNR (445 aa). A compositionally biased stretch (low complexity) spans 10-22; the sequence is TDQQDYSSSSTYT. Gly residues predominate over residues 29–45; the sequence is GGAGAGSVGTGTAGGSV. The span at 68–77 shows a compositional bias: polar residues; the sequence is NYQSGDSIST. The stretch at 245 to 269 forms a coiled coil; sequence IKGDLNALNQQIARLQDISKDQRRH. The segment at 310–335 is disordered; the sequence is QQKTRRDQFSQGPGPLAAHTVSPSTA. A t-SNARE coiled-coil homology domain is found at 375–437; sequence DNYVQQRAET…EAAHGEILKY (63 aa). Residues 446 to 466 form a helical; Anchor for type IV membrane protein membrane-spanning segment; it reads WLMIKIFGVLIFFFLFFVVFM. S467 is a topological domain (vesicular).

This sequence belongs to the syntaxin family. As to quaternary structure, homodimer.

It is found in the golgi apparatus. The protein resides in the cis-Golgi network membrane. In terms of biological role, mediates endoplasmic reticulum to Golgi transport. This is Syntaxin-5 from Drosophila melanogaster (Fruit fly).